The primary structure comprises 169 residues: Ubiquitin-conjugating enzyme E2 2 (169 aa).

In terms of domain architecture, UBC core spans 4 to 150; the sequence is AAKRRLIRDF…VKKTVELSWV (147 aa). Catalysis depends on cysteine 88, which acts as the Glycyl thioester intermediate.

The protein belongs to the ubiquitin-conjugating enzyme family.

The protein localises to the cytoplasm. It is found in the nucleus. It carries out the reaction S-ubiquitinyl-[E1 ubiquitin-activating enzyme]-L-cysteine + [E2 ubiquitin-conjugating enzyme]-L-cysteine = [E1 ubiquitin-activating enzyme]-L-cysteine + S-ubiquitinyl-[E2 ubiquitin-conjugating enzyme]-L-cysteine.. Its pathway is protein modification; protein ubiquitination. Functionally, catalyzes the covalent attachment of ubiquitin to other proteins. Plays a role in transcription regulation by catalyzing the monoubiquitination of histone H2B to form H2BK123ub1. H2BK123ub1 gives a specific tag for epigenetic transcriptional activation and is also a prerequisite for H3K4me and H3K79me formation. Also involved in postreplication repair of UV-damaged DNA, in N-end rule-dependent protein degradation and in sporulation. In Cryptococcus neoformans var. neoformans serotype D (strain B-3501A) (Filobasidiella neoformans), this protein is Ubiquitin-conjugating enzyme E2 2 (UBC2).